The sequence spans 692 residues: MSYTPMSDLGQQGLFDITRTLLQQPDLASLCEALSQLVKRSALADNAAIVLWQAQTQRASYYASREKDTPIKYEDETVLAHGPVRSILSRPDTLHCSYEEFCETWPQLDAGGLYPKFGHYCLMPLAAEGHIFGGCEFIRYDDRPWSEKEFNRLQTFTQIVSVVTEQIQSRVVNNVDYELLCRERDNFRILVAITNAVLSRLDMDELVSEVAKEIHYYFDIDDISIVLRSHRKNKLNIYSTHYLDKQHPAHEQSEVDEAGTLTERVFKSKEMLLINLHERDDLAPYERMLFDTWGNQIQTLCLLPLMSGDTMLGVLKLAQCEEKVFTTTNLNLLRQIAERVAIAVDNALAYQEIHRLKERLVDENLALTEQLNNVDSEFGEIIGRSEAMYSVLKQVEMVAQSDSTVLILGETGTGKELIARAIHNLSGRNNRRMVKMNCAAMPAGLLESDLFGHERGAFTGASAQRIGRFELADKSSLFLDEVGDMPLELQPKLLRVLQEQEFERLGSNKIIQTDVRLIAATNRDLKKMVADREFRSDLYYRLNVFPIHLPPLRERPEDIPLLAKAFTFKIARRLGRNIDSIPAETLRTLSNMEWPGNVRELENVIERAVLLTRGNVLQLSLPDIVLPEPETPPAATVVALEGEDEYQLIVRVLKETNGVVAGPKGAAQRLGLKRTTLLSRMKRLGIDKSALI.

The region spanning aspartate 202–valine 344 is the GAF domain. Positions isoleucine 381–leucine 610 constitute a Sigma-54 factor interaction domain. Residues glycine 409–glutamate 416 and alanine 472–glutamate 481 each bind ATP. Positions proline 663–lysine 682 form a DNA-binding region, H-T-H motif.

In terms of biological role, required for induction of expression of the formate dehydrogenase H and hydrogenase-3 structural genes. Also activates expression of hyf operon (encodes the silent hydrogenase-4 gene cluster). The sequence is that of Formate hydrogenlyase transcriptional activator FhlA (fhlA) from Escherichia coli (strain K12).